The chain runs to 217 residues: Ribonuclease HII (217 aa).

Positions 25–215 (KLIAGVDESG…VKHVISDINR (191 aa)) constitute an RNase H type-2 domain. A divalent metal cation is bound by residues aspartate 31, glutamate 32, and aspartate 123.

The protein belongs to the RNase HII family. The cofactor is Mn(2+). Mg(2+) serves as cofactor.

It localises to the cytoplasm. The catalysed reaction is Endonucleolytic cleavage to 5'-phosphomonoester.. Functionally, endonuclease that specifically degrades the RNA of RNA-DNA hybrids. This Blochmanniella pennsylvanica (strain BPEN) protein is Ribonuclease HII.